A 129-amino-acid chain; its full sequence is Small ribosomal subunit protein uS9 (129 aa).

It belongs to the universal ribosomal protein uS9 family.

The protein is Small ribosomal subunit protein uS9 of Chlorobium phaeovibrioides (strain DSM 265 / 1930) (Prosthecochloris vibrioformis (strain DSM 265)).